The chain runs to 406 residues: Phosphatidylinositol 5-phosphate 4-kinase type-2 alpha (406 aa).

Ala-2 is modified (N-acetylalanine). Thr-3 carries the phosphothreonine modification. The residue at position 14 (Ser-14) is a Phosphoserine. Positions 33-405 (ASDPLLSVLM…RFLDFIGHIL (373 aa)) constitute a PIPK domain. Residues 59 to 65 (VMLMPDD) form a required for interaction with PIP5K1A region. N6-acetyllysine occurs at positions 89 and 145. Positions 287 to 328 (EQEEVECEENEGEEEGESDGAHPIGTPPDSPGNTLNSSPPLA) are disordered. Residues 289-304 (EEVECEENEGEEEGES) show a composition bias toward acidic residues.

In terms of assembly, homodimer. Interacts with PIP4K2B; the interaction may regulate localization to the nucleus. Probably interacts with PIP5K1A; the interaction inhibits PIP5K1A kinase activity. Phosphorylated in tyrosines. Phosphorylation is induced by light and increases kinase activity.

The protein localises to the cell membrane. It is found in the nucleus. Its subcellular location is the lysosome. It localises to the cytoplasm. The protein resides in the photoreceptor inner segment. The protein localises to the cell projection. It is found in the cilium. Its subcellular location is the photoreceptor outer segment. The enzyme catalyses a 1,2-diacyl-sn-glycero-3-phospho-(1D-myo-inositol-5-phosphate) + ATP = a 1,2-diacyl-sn-glycero-3-phospho-(1D-myo-inositol-4,5-bisphosphate) + ADP + H(+). It catalyses the reaction 1,2-dihexadecanoyl-sn-glycero-3-phospho-(1D-myo-inositol-5-phosphate) + ATP = 1,2-dihexadecanoyl-sn-glycero-3-phospho-(1D-myo-inositol-4,5-bisphosphate) + ADP + H(+). The catalysed reaction is 1,2-dihexadecanoyl-sn-glycero-3-phospho-(1D-myo-inositol-5-phosphate) + GTP = 1,2-dihexadecanoyl-sn-glycero-3-phospho-(1D-myo-inositol-4,5-bisphosphate) + GDP + H(+). With respect to regulation, in rod outer segments, activated by light. Its function is as follows. Catalyzes the phosphorylation of phosphatidylinositol 5-phosphate (PtdIns5P) on the fourth hydroxyl of the myo-inositol ring, to form phosphatidylinositol 4,5-bisphosphate (PtdIns(4,5)P2). Has both ATP- and GTP-dependent kinase activities. May exert its function by regulating the levels of PtdIns5P, which functions in the cytosol by increasing AKT activity and in the nucleus signals through ING2. May regulate the pool of cytosolic PtdIns5P in response to the activation of tyrosine phosphorylation. Required for lysosome-peroxisome membrane contacts and intracellular cholesterol transport through modulating peroxisomal PtdIns(4,5)P2 level. In collaboration with PIP4K2B, has a role in mediating autophagy in times of nutrient stress. Required for autophagosome-lysosome fusion and the regulation of cellular lipid metabolism. Negatively regulates insulin signaling through a catalytic-independent mechanism. PIP4Ks interact with PIP5Ks and suppress PIP5K-mediated PtdIns(4,5)P2 synthesis and insulin-dependent conversion to PtdIns(3,4,5)P3. May be involved in thrombopoiesis, and the terminal maturation of megakaryocytes and regulation of their size. The chain is Phosphatidylinositol 5-phosphate 4-kinase type-2 alpha from Rattus norvegicus (Rat).